The sequence spans 407 residues: Extracellular superoxide dismutase [Cu-Zn] 3 (407 aa).

The first 19 residues, 1 to 19 (MRLLSVLVFLISVISIAKA), serve as a signal peptide directing secretion. Residues 20-386 (DYQYAFCKFN…SESYNDNEPG (367 aa)) are Extracellular-facing. N-linked (GlcNAc...) asparagine glycosylation is found at Asn-51, Asn-205, and Asn-224. Cu cation is bound by residues His-245 and His-247. N-linked (GlcNAc...) asparagine glycosylation occurs at Asn-256. Position 263 (His-263) interacts with Cu cation. Residues His-263, His-271, His-280, and Asp-283 each contribute to the Zn(2+) site. A Cu cation-binding site is contributed by His-320. Asn-321 and Asn-364 each carry an N-linked (GlcNAc...) asparagine glycan. A helical membrane pass occupies residues 387–406 (SSSTVIPFFALIIFSIIFAL). Position 407 (Leu-407) is a topological domain, cytoplasmic.

It belongs to the Cu-Zn superoxide dismutase family. Cu cation serves as cofactor. It depends on Zn(2+) as a cofactor.

It is found in the cell membrane. The enzyme catalyses 2 superoxide + 2 H(+) = H2O2 + O2. Its function is as follows. Protect the extracellular space from toxic effect of reactive oxygen intermediates by converting superoxyde radicals into hydrogen peroxyde and oxygen. This chain is Extracellular superoxide dismutase [Cu-Zn] 3 (sodC), found in Dictyostelium discoideum (Social amoeba).